A 222-amino-acid chain; its full sequence is Chymotrypsin-1 (222 aa).

The region spanning 1 to 221 is the Peptidase S1 domain; that stretch reads IVGGKDAPVG…FVSWINANLK (221 aa). The cysteines at positions 26 and 42 are disulfide-linked. Catalysis depends on charge relay system residues histidine 41 and aspartate 87. 2 disulfide bridges follow: cysteine 151–cysteine 164 and cysteine 174–cysteine 198. The active-site Charge relay system is serine 178.

Belongs to the peptidase S1 family.

The protein localises to the secreted. Its subcellular location is the extracellular space. The enzyme catalyses Preferential cleavage: Tyr-|-Xaa, Trp-|-Xaa, Phe-|-Xaa, Leu-|-Xaa.. The polypeptide is Chymotrypsin-1 (Solenopsis invicta (Red imported fire ant)).